The sequence spans 635 residues: MIVITLPDGSQREFPGPVTVAEVAASIGTGLAKAALGGRVDGKLVDTGHRIEGDARLAIVTDKDADGLDLIRHSTAHLLAYAVKELFPEAQVTIGPVIENGFYYDFSYKRPFTPEDLAAIEAKMTELAKKDEKVERRVLPRDEAVAYFKSIGEDYKAEIIAGIPAGQDVSLYREGRFEDLCRGPHVPSTGKLRHFKLMKVAGAYWRGDHRNEMLQRIYGTAWASKDELQQYLHMLEEAEKRDHRKLGRELDLFHLDEHAPGLVFWHPKGWTVWQQVEQYMRAVYRDNGYLEVKGPQILDQGLWEKTGHWDKYRENMFVTESEKRDYALKPMNCPGHILIYKQGIKSYRDLPLRYGEFGQCHRNEPTGGLHGIMRVRGFTQDDGHIFCTEEHILPECVAYTALLQKVYKDFGFNDIIYKVATRPEKRIGSDAVWDKAEHALMESLRASGCEFVVSPGDGAFYGPKIEYTLKDALGRQWQCGTMQVDFSLPERLDAVYVAESGERLFPVMLHRAIVGSLERFIGILIEQHAGALPAWLAPVQVMVLNITDGQADYAAEIAKTLQKQGVRAGVDLRNEKITYKIREHSMQKLPYILVVGDKEKAAGAVAVRARGNQDLGVMPLDAFSQRMASDIAHKV.

Positions 1–61 constitute a TGS domain; it reads MIVITLPDGS…EGDARLAIVT (61 aa). Positions 242–533 are catalytic; that stretch reads DHRKLGRELD…LIEQHAGALP (292 aa). Zn(2+)-binding residues include cysteine 333, histidine 384, and histidine 510.

This sequence belongs to the class-II aminoacyl-tRNA synthetase family. In terms of assembly, homodimer. It depends on Zn(2+) as a cofactor.

It is found in the cytoplasm. The enzyme catalyses tRNA(Thr) + L-threonine + ATP = L-threonyl-tRNA(Thr) + AMP + diphosphate + H(+). In terms of biological role, catalyzes the attachment of threonine to tRNA(Thr) in a two-step reaction: L-threonine is first activated by ATP to form Thr-AMP and then transferred to the acceptor end of tRNA(Thr). Also edits incorrectly charged L-seryl-tRNA(Thr). In Methylibium petroleiphilum (strain ATCC BAA-1232 / LMG 22953 / PM1), this protein is Threonine--tRNA ligase.